The primary structure comprises 100 residues: Large ribosomal subunit protein uL23 (100 aa).

It belongs to the universal ribosomal protein uL23 family. Part of the 50S ribosomal subunit. Contacts protein L29, and trigger factor when it is bound to the ribosome.

One of the early assembly proteins it binds 23S rRNA. One of the proteins that surrounds the polypeptide exit tunnel on the outside of the ribosome. Forms the main docking site for trigger factor binding to the ribosome. The polypeptide is Large ribosomal subunit protein uL23 (Escherichia coli O157:H7).